Consider the following 247-residue polypeptide: Ubiquinone biosynthesis O-methyltransferase (247 aa).

The S-adenosyl-L-methionine site is built by Arg-39, Gly-70, Asp-91, and Met-134.

It belongs to the methyltransferase superfamily. UbiG/COQ3 family.

The catalysed reaction is a 3-demethylubiquinol + S-adenosyl-L-methionine = a ubiquinol + S-adenosyl-L-homocysteine + H(+). The enzyme catalyses a 3-(all-trans-polyprenyl)benzene-1,2-diol + S-adenosyl-L-methionine = a 2-methoxy-6-(all-trans-polyprenyl)phenol + S-adenosyl-L-homocysteine + H(+). The protein operates within cofactor biosynthesis; ubiquinone biosynthesis. In terms of biological role, O-methyltransferase that catalyzes the 2 O-methylation steps in the ubiquinone biosynthetic pathway. The protein is Ubiquinone biosynthesis O-methyltransferase of Cereibacter sphaeroides (strain KD131 / KCTC 12085) (Rhodobacter sphaeroides).